The primary structure comprises 334 residues: S-adenosylmethionine decarboxylase proenzyme (334 aa).

A substrate-binding site is contributed by phenylalanine 7. Residues glutamate 8 and glutamate 11 contribute to the active site. Residue glutamate 67 participates in substrate binding. Serine 68 serves as the catalytic Schiff-base intermediate with substrate; via pyruvic acid. Serine 68 carries the post-translational modification Pyruvic acid (Ser); by autocatalysis. Cysteine 82 acts as the Proton donor; for catalytic activity in catalysis. A substrate-binding site is contributed by phenylalanine 223. Catalysis depends on proton acceptor; for processing activity residues serine 229 and histidine 243. Position 247 (glutamate 247) interacts with substrate. Phosphoserine is present on serine 298.

The protein belongs to the eukaryotic AdoMetDC family. Heterotetramer of two alpha and two beta chains. Pyruvate is required as a cofactor. Is synthesized initially as an inactive proenzyme. Formation of the active enzyme involves a self-maturation process in which the active site pyruvoyl group is generated from an internal serine residue via an autocatalytic post-translational modification. Two non-identical subunits are generated from the proenzyme in this reaction, and the pyruvate is formed at the N-terminus of the alpha chain, which is derived from the carboxyl end of the proenzyme. The post-translation cleavage follows an unusual pathway, termed non-hydrolytic serinolysis, in which the side chain hydroxyl group of the serine supplies its oxygen atom to form the C-terminus of the beta chain, while the remainder of the serine residue undergoes an oxidative deamination to produce ammonia and the pyruvoyl group blocking the N-terminus of the alpha chain.

It catalyses the reaction S-adenosyl-L-methionine + H(+) = S-adenosyl 3-(methylsulfanyl)propylamine + CO2. Its pathway is amine and polyamine biosynthesis; S-adenosylmethioninamine biosynthesis; S-adenosylmethioninamine from S-adenosyl-L-methionine: step 1/1. Its function is as follows. Essential for biosynthesis of the polyamines spermidine and spermine. Promotes maintenance and self-renewal of embryonic stem cells, by maintaining spermine levels. The chain is S-adenosylmethionine decarboxylase proenzyme (AMD1) from Bos taurus (Bovine).